The sequence spans 387 residues: Deoxyhypusine synthase (387 aa).

NAD(+) contacts are provided by residues 108–112 (SNLIS), 134–136 (SAG), Glu-140, and Asp-257. 139–140 (EE) contributes to the spermidine binding site. Asp-262 contributes to the spermidine binding site. An NAD(+)-binding site is contributed by Gly-304. His-309 is a binding site for spermidine. 329–330 (TG) is a binding site for NAD(+). Spermidine is bound by residues 335 to 337 (GSD) and 344 to 350 (EAVSWGK). The active-site Nucleophile is Lys-350. 363–364 (DV) is a binding site for NAD(+).

It belongs to the deoxyhypusine synthase family. In terms of assembly, homotetramer. NAD(+) is required as a cofactor.

The enzyme catalyses [eIF5A protein]-L-lysine + spermidine = [eIF5A protein]-deoxyhypusine + propane-1,3-diamine. Its pathway is protein modification; eIF5A hypusination. Its function is as follows. Catalyzes the NAD-dependent oxidative cleavage of spermidine and the subsequent transfer of the butylamine moiety of spermidine to the epsilon-amino group of a specific lysine residue of the eIF-5A precursor protein to form the intermediate deoxyhypusine residue. This chain is Deoxyhypusine synthase, found in Saccharomyces cerevisiae (strain ATCC 204508 / S288c) (Baker's yeast).